Consider the following 154-residue polypeptide: Putative ankyrin repeat protein RBE_1220 (154 aa).

ANK repeat units follow at residues 78 to 108 (EKVN…NVDQ) and 113 to 142 (NSRT…ILIL).

The sequence is that of Putative ankyrin repeat protein RBE_1220 from Rickettsia bellii (strain RML369-C).